Consider the following 79-residue polypeptide: Protein S100-G (79 aa).

S2 carries the N-acetylserine modification. 2 EF-hand domains span residues 13 to 48 (IFQK…KASS) and 45 to 79 (KASS…KLSQ). Ca(2+) contacts are provided by Q26 and E31. A phosphoserine mark is found at S42 and S47. Residues D58, N60, D62, E64, and E69 each coordinate Ca(2+).

Belongs to the S-100 family.

The protein is Protein S100-G (S100g) of Rattus norvegicus (Rat).